Here is a 203-residue protein sequence, read N- to C-terminus: Outer-membrane lipoprotein LolB (203 aa).

The signal sequence occupies residues M1–G18. The N-palmitoyl cysteine moiety is linked to residue C19. Residue C19 is the site of S-diacylglycerol cysteine attachment.

The protein belongs to the LolB family. In terms of assembly, monomer.

It is found in the cell outer membrane. Plays a critical role in the incorporation of lipoproteins in the outer membrane after they are released by the LolA protein. This is Outer-membrane lipoprotein LolB from Cellvibrio japonicus (strain Ueda107) (Pseudomonas fluorescens subsp. cellulosa).